We begin with the raw amino-acid sequence, 455 residues long: MEANFQQAVKKLVNDFEYPTESLREAVKEFDELRQKGLQKNGEVLAMAPAFISTLPTGAETGDFLALDFGGTNLRVCWIQLLGDGKYEMKHSKSVLPRECVRNESVKPIIDFMSDHVELFIKEHFPSKFGCPEEEYLPMGFTFSYPANQVSITESYLLRWTKGLNIPEAINKDFAQFLTEGFKARNLPIRIEAVINDTVGTLVTRAYTSKESDTFMGIIFGTGTNGAYVEQMNQIPKLAGKCTGDHMLINMEWGATDFSCLHSTRYDLLLDHDTPNAGRQIFEKRVGGMYLGELFRRALFHLIKVYNFNEGIFPPSITDAWSLETSVLSRMMVERSAENVRNVLSTFKFRFRSDEEALYLWDAAHAIGRRAARMSAVPIASLYLSTGRAGKKSDVGVDGSLVEHYPHFVDMLREALRELIGDNEKLISIGIAKDGSGIGAALCALQAVKEKKGLA.

Residues 3-445 (ANFQQAVKKL…SGIGAALCAL (443 aa)) enclose the Hexokinase domain. Positions 57 to 195 (TGAETGDFLA…NLPIRIEAVI (139 aa)) are hexokinase small subdomain. Position 68 to 73 (68 to 73 (DFGGTN)) interacts with ATP. Substrate is bound by residues 144-145 (SY), 161-162 (TK), and 196-197 (ND). The tract at residues 196–434 (NDTVGTLVTR…KLISIGIAKD (239 aa)) is hexokinase large subdomain. An ATP-binding site is contributed by T222. Substrate-binding residues include N225, E252, and E283. Residues 288–289 (GM), 325–329 (TSVLS), and 400–404 (SLVEH) contribute to the ATP site.

The protein belongs to the hexokinase family. In terms of assembly, monomer.

It carries out the reaction a D-hexose + ATP = a D-hexose 6-phosphate + ADP + H(+). The enzyme catalyses D-mannose + ATP = D-mannose 6-phosphate + ADP + H(+). It catalyses the reaction D-fructose + ATP = D-fructose 6-phosphate + ADP + H(+). The catalysed reaction is D-glucose + ATP = D-glucose 6-phosphate + ADP + H(+). It participates in carbohydrate metabolism; hexose metabolism. It functions in the pathway carbohydrate degradation; glycolysis; D-glyceraldehyde 3-phosphate and glycerone phosphate from D-glucose: step 1/4. Functionally, catalyzes the phosphorylation of hexose (six-carbon sugars) to hexose 6-phosphate. Phosphorylates D-glucose, D-fructose and D-mannose. Compared to hxk1, has a much higher affinity for D-glucose. Constitutes the initial enzyme of glycolysis by catalyzing the phosphorylation of glucose to D-glucose 6-phosphate. The protein is Hexokinase-2 of Schizosaccharomyces pombe (strain 972 / ATCC 24843) (Fission yeast).